Consider the following 78-residue polypeptide: Delta-conotoxin TxVIA (78 aa).

The N-terminal stretch at 1–22 (MKLTCMMIVAVLFLTAWTFATA) is a signal peptide. Positions 23 to 49 (DDPRNGLGNLFSNAHHEMKNPEASKLN) are excised as a propeptide. 3 disulfides stabilise this stretch: C53-C68, C60-C72, and C67-C77. M59 bears the Methionine sulfoxide; partial mark.

Belongs to the conotoxin O1 superfamily. In terms of tissue distribution, expressed by the venom duct.

The protein localises to the secreted. Delta-conotoxins bind to site 6 of voltage-gated sodium channels (Nav) and inhibit the inactivation process. Binding of this toxin is strongly calcium-dependent but not voltage-dependent. The binding site is most likely on the extracellular side of the sodium channel. Binds receptor sites on both mollusk and rat central nervous system, but despite its high affinity binding to rat sodium channel, it has no functional effect in vivo and in vitro on it. Also has no effect on Gambusia fish. Is important in mollusk for the paralysis of the prey. Upon injection of the peptide, a subordinate lobster assumes an exaggerated dominant posture (of a 'King-Kong' lobster!). In Conus textile (Cloth-of-gold cone), this protein is Delta-conotoxin TxVIA.